Consider the following 565-residue polypeptide: Small ribosomal subunit protein bS1 (565 aa).

6 S1 motif domains span residues 30–96, 114–180, 201–269, 286–356, 373–443, and 454–529; these read SSVI…LSRD, NEKV…VSRR, GQVI…LGMK, NARF…LGLK, GSTV…LGVK, and GDVK…VSIK.

Belongs to the bacterial ribosomal protein bS1 family. The initiator methionine may be removed.

In terms of biological role, binds mRNA; thus facilitating recognition of the initiation point. It is needed to translate mRNA with a short Shine-Dalgarno (SD) purine-rich sequence. This Rhodopseudomonas palustris (strain ATCC BAA-98 / CGA009) protein is Small ribosomal subunit protein bS1 (rpsA).